The sequence spans 130 residues: Sulfurtransferase TusD (130 aa).

The Cysteine persulfide intermediate role is filled by C80.

It belongs to the DsrE/TusD family. As to quaternary structure, heterohexamer, formed by a dimer of trimers. The hexameric TusBCD complex contains 2 copies each of TusB, TusC and TusD. The TusBCD complex interacts with TusE.

It localises to the cytoplasm. Its function is as follows. Part of a sulfur-relay system required for 2-thiolation of 5-methylaminomethyl-2-thiouridine (mnm(5)s(2)U) at tRNA wobble positions. Accepts sulfur from TusA and transfers it in turn to TusE. This chain is Sulfurtransferase TusD, found in Proteus mirabilis (strain HI4320).